Reading from the N-terminus, the 78-residue chain is MRPCIWIHVHLKPPCRLVELLPFSSALQGLSHLSLGTTLPVILPERNEEQNLQELSHNADKYQMGDCCKEEIDDSIFY.

Functionally, may act as a tumor suppressor. The protein is Leukemia-associated protein 1 (DLEU1) of Homo sapiens (Human).